The following is a 240-amino-acid chain: Glutamine amidotransferase-like protein chry6 (240 aa).

Residues 13 to 205 (NFILDDTGGR…FVASDNPVLV (193 aa)) form the Glutamine amidotransferase type-1 domain. Residue Cys102 is the Nucleophile of the active site. Residues His185 and Glu187 contribute to the active site.

Belongs to the peptidase C26 family.

The protein operates within pigment biosynthesis. In terms of biological role, glutamine amidotransferase-like protein; part of the gene cluster that mediates the biosynthesis of the yellow pigment chrysogine. Pyruvic acid and anthranilic acid are likely substrates for the nonribosomal peptide synthetase chry1/NRPS14, with pyruvic acid adenylated by the first A domain and anthranilic acid by the second. If pyruvic acid and anthranilic acid are merged and released from chry1/NRPS14 by hydrolysis, a subsequent amidation would lead to 2-pyruvoylaminobenzamide. This process is probably catalyzed by the amidotransferase chry2 using glutamine as amino donor. The dehydrogenase chry5 that has a terminal berberine bridge domain for C-N cyclization could catalyze the cyclization of 2-pyruvoylaminobenzamide to yield acetyl-4(3H)-quinazolidinone. A final reduction of acetyl-4(3H)-quinazolidinone catalyzed by the oxidoreductase chry4 would result in chrysogine. This chain is Glutamine amidotransferase-like protein chry6, found in Gibberella zeae (strain ATCC MYA-4620 / CBS 123657 / FGSC 9075 / NRRL 31084 / PH-1) (Wheat head blight fungus).